A 432-amino-acid chain; its full sequence is Acetylserotonin O-methyltransferase (432 aa).

Residues Tyr-146, Trp-163, Asp-209, 235-237 (GDF), and Arg-252 contribute to the S-adenosyl-L-methionine site. Residue His-255 is the Proton donor/acceptor of the active site. Positions 256, 302, and 306 each coordinate substrate. Residues 373-432 (VPGARSDAAGTGSGTGNTGSGIMLQGETLESEVSAPQAGSDVGGAGNEPRSGTLKQGDWK) form a disordered region.

This sequence belongs to the class I-like SAM-binding methyltransferase superfamily. Cation-independent O-methyltransferase family. Homodimer. In terms of tissue distribution, expressed predominantly in the pineal gland (at protein level). Very low expression, if any, in the retina.

It catalyses the reaction N-acetylserotonin + S-adenosyl-L-methionine = melatonin + S-adenosyl-L-homocysteine + H(+). The protein operates within aromatic compound metabolism; melatonin biosynthesis; melatonin from serotonin: step 1/2. Catalyzes the transfer of a methyl group onto N-acetylserotonin, producing melatonin (N-acetyl-5-methoxytryptamine). The chain is Acetylserotonin O-methyltransferase (Asmt) from Rattus norvegicus (Rat).